The following is a 294-amino-acid chain: Glyceraldehyde-3-phosphate dehydrogenase (294 aa).

3 residues coordinate NAD(+): aspartate 19, arginine 63, and threonine 105. D-glyceraldehyde 3-phosphate is bound by residues serine 134–threonine 136 and threonine 165. Cysteine 135 (nucleophile) is an active-site residue. Lysine 177 is modified (N6-acetyllysine). D-glyceraldehyde 3-phosphate is bound by residues threonine 194–glycine 195 and arginine 217. Lysine 234 is modified (N6-acetyllysine).

Belongs to the glyceraldehyde-3-phosphate dehydrogenase family. In terms of assembly, homotetramer.

The protein resides in the cytoplasm. The catalysed reaction is D-glyceraldehyde 3-phosphate + phosphate + NAD(+) = (2R)-3-phospho-glyceroyl phosphate + NADH + H(+). The protein operates within carbohydrate degradation; glycolysis; pyruvate from D-glyceraldehyde 3-phosphate: step 1/5. Its function is as follows. Catalyzes the oxidative phosphorylation of glyceraldehyde 3-phosphate (G3P) to 1,3-bisphosphoglycerate (BPG) using the cofactor NAD. The first reaction step involves the formation of a hemiacetal intermediate between G3P and a cysteine residue, and this hemiacetal intermediate is then oxidized to a thioester, with concomitant reduction of NAD to NADH. The reduced NADH is then exchanged with the second NAD, and the thioester is attacked by a nucleophilic inorganic phosphate to produce BPG. The protein is Glyceraldehyde-3-phosphate dehydrogenase (gap) of Pseudescherichia vulneris (Escherichia vulneris).